The primary structure comprises 307 residues: F-box protein At5g03100 (307 aa).

Positions 8–54 (VDFISSLPDEILHHILANTPTKLAIRTSVLSKRWKHVWYETPSISIV) constitute an F-box domain.

This Arabidopsis thaliana (Mouse-ear cress) protein is F-box protein At5g03100.